We begin with the raw amino-acid sequence, 330 residues long: Aspartate--ammonia ligase (330 aa).

This sequence belongs to the class-II aminoacyl-tRNA synthetase family. AsnA subfamily.

The protein resides in the cytoplasm. The catalysed reaction is L-aspartate + NH4(+) + ATP = L-asparagine + AMP + diphosphate + H(+). The protein operates within amino-acid biosynthesis; L-asparagine biosynthesis; L-asparagine from L-aspartate (ammonia route): step 1/1. The chain is Aspartate--ammonia ligase from Edwardsiella ictaluri (strain 93-146).